The sequence spans 126 residues: Protein translocase subunit SecE (126 aa).

3 helical membrane passes run 20-40, 42-62, and 97-117; these read WLAA…YGEM, VVVR…VAAT, and IVLA…GIMV.

Belongs to the SecE/SEC61-gamma family. As to quaternary structure, component of the Sec protein translocase complex. Heterotrimer consisting of SecY, SecE and SecG subunits. The heterotrimers can form oligomers, although 1 heterotrimer is thought to be able to translocate proteins. Interacts with the ribosome. Interacts with SecDF, and other proteins may be involved. Interacts with SecA.

The protein resides in the cell inner membrane. Essential subunit of the Sec protein translocation channel SecYEG. Clamps together the 2 halves of SecY. May contact the channel plug during translocation. The protein is Protein translocase subunit SecE of Vibrio alginolyticus.